The sequence spans 419 residues: Serine--tRNA ligase (419 aa).

226-228 (TSE) lines the L-serine pocket. ATP-binding positions include 257–259 (RRE) and Val-273. Glu-280 is an L-serine binding site. Residue 344–347 (ELTS) coordinates ATP. Residue Thr-379 coordinates L-serine.

The protein belongs to the class-II aminoacyl-tRNA synthetase family. Type-1 seryl-tRNA synthetase subfamily. Homodimer. The tRNA molecule binds across the dimer.

It is found in the cytoplasm. It carries out the reaction tRNA(Ser) + L-serine + ATP = L-seryl-tRNA(Ser) + AMP + diphosphate + H(+). The enzyme catalyses tRNA(Sec) + L-serine + ATP = L-seryl-tRNA(Sec) + AMP + diphosphate + H(+). The protein operates within aminoacyl-tRNA biosynthesis; selenocysteinyl-tRNA(Sec) biosynthesis; L-seryl-tRNA(Sec) from L-serine and tRNA(Sec): step 1/1. Functionally, catalyzes the attachment of serine to tRNA(Ser). Is also able to aminoacylate tRNA(Sec) with serine, to form the misacylated tRNA L-seryl-tRNA(Sec), which will be further converted into selenocysteinyl-tRNA(Sec). The protein is Serine--tRNA ligase of Mycobacterium marinum (strain ATCC BAA-535 / M).